A 188-amino-acid chain; its full sequence is Elongation factor P (188 aa).

An N6-(3,6-diaminohexanoyl)-5-hydroxylysine modification is found at lysine 34.

Belongs to the elongation factor P family. In terms of processing, may be beta-lysylated on the epsilon-amino group of Lys-34 by the combined action of EpmA and EpmB, and then hydroxylated on the C5 position of the same residue by EpmC (if this protein is present). Lysylation is critical for the stimulatory effect of EF-P on peptide-bond formation. The lysylation moiety may extend toward the peptidyltransferase center and stabilize the terminal 3-CCA end of the tRNA. Hydroxylation of the C5 position on Lys-34 may allow additional potential stabilizing hydrogen-bond interactions with the P-tRNA.

It localises to the cytoplasm. It participates in protein biosynthesis; polypeptide chain elongation. Involved in peptide bond synthesis. Alleviates ribosome stalling that occurs when 3 or more consecutive Pro residues or the sequence PPG is present in a protein, possibly by augmenting the peptidyl transferase activity of the ribosome. Modification of Lys-34 is required for alleviation. The chain is Elongation factor P from Xanthomonas oryzae pv. oryzae (strain MAFF 311018).